The following is a 109-amino-acid chain: Co-chaperonin GroES (109 aa).

Belongs to the GroES chaperonin family. As to quaternary structure, heptamer of 7 subunits arranged in a ring. Interacts with the chaperonin GroEL.

It localises to the cytoplasm. Its function is as follows. Together with the chaperonin GroEL, plays an essential role in assisting protein folding. The GroEL-GroES system forms a nano-cage that allows encapsulation of the non-native substrate proteins and provides a physical environment optimized to promote and accelerate protein folding. GroES binds to the apical surface of the GroEL ring, thereby capping the opening of the GroEL channel. The polypeptide is Co-chaperonin GroES (Methanosarcina acetivorans (strain ATCC 35395 / DSM 2834 / JCM 12185 / C2A)).